Consider the following 142-residue polypeptide: Matrix protein (142 aa).

Residues 64 to 66 and Ala-117 contribute to the GMP site; that span reads DVE.

In terms of assembly, homooligomer. Homotetramer. Interacts with phosphoprotein P. Binds to ssRNA. Post-translationally, not glycosylated.

It is found in the virion. The protein localises to the host cytoplasm. The protein resides in the host cell membrane. Its function is as follows. Plays a crucial role in virion assembly and budding. The chain is Matrix protein (M) from Bos taurus (Bovine).